The chain runs to 1615 residues: Mediator of RNA polymerase II transcription subunit 23 (1615 aa).

2 disordered regions span residues 40-67 (RQKP…DLPP) and 1230-1270 (SSSS…NASE). Over residues 41 to 51 (QKPDESLRDPP) the composition is skewed to basic and acidic residues. Residues 1230–1241 (SSSSNCSSRSGS) are compositionally biased toward low complexity.

It belongs to the Mediator complex subunit 23 family. In terms of assembly, component of the Mediator complex.

It localises to the nucleus. Its function is as follows. Component of the Mediator complex, a coactivator involved in the regulated transcription of nearly all RNA polymerase II-dependent genes. Mediator functions as a bridge to convey information from gene-specific regulatory proteins to the basal RNA polymerase II transcription machinery. The Mediator complex, having a compact conformation in its free form, is recruited to promoters by direct interactions with regulatory proteins and serves for the assembly of a functional preinitiation complex with RNA polymerase II and the general transcription factors. The chain is Mediator of RNA polymerase II transcription subunit 23 (MED23) from Arabidopsis thaliana (Mouse-ear cress).